A 275-amino-acid chain; its full sequence is Formamidopyrimidine-DNA glycosylase (275 aa).

P2 acts as the Schiff-base intermediate with DNA in catalysis. E3 serves as the catalytic Proton donor. K58 acts as the Proton donor; for beta-elimination activity in catalysis. Residues H93, R111, and R156 each coordinate DNA. The segment at 241–275 (FVYDRAGEPCRVCGTPIRQIVQGQRSTYFCPTCQR) adopts an FPG-type zinc-finger fold. The Proton donor; for delta-elimination activity role is filled by R265.

Belongs to the FPG family. As to quaternary structure, monomer. The cofactor is Zn(2+).

It catalyses the reaction Hydrolysis of DNA containing ring-opened 7-methylguanine residues, releasing 2,6-diamino-4-hydroxy-5-(N-methyl)formamidopyrimidine.. It carries out the reaction 2'-deoxyribonucleotide-(2'-deoxyribose 5'-phosphate)-2'-deoxyribonucleotide-DNA = a 3'-end 2'-deoxyribonucleotide-(2,3-dehydro-2,3-deoxyribose 5'-phosphate)-DNA + a 5'-end 5'-phospho-2'-deoxyribonucleoside-DNA + H(+). In terms of biological role, involved in base excision repair of DNA damaged by oxidation or by mutagenic agents. Acts as a DNA glycosylase that recognizes and removes damaged bases. Has a preference for oxidized purines, such as 7,8-dihydro-8-oxoguanine (8-oxoG). Has AP (apurinic/apyrimidinic) lyase activity and introduces nicks in the DNA strand. Cleaves the DNA backbone by beta-delta elimination to generate a single-strand break at the site of the removed base with both 3'- and 5'-phosphates. This Burkholderia multivorans (strain ATCC 17616 / 249) protein is Formamidopyrimidine-DNA glycosylase.